The chain runs to 153 residues: SsrA-binding protein (153 aa).

Belongs to the SmpB family.

Its subcellular location is the cytoplasm. Its function is as follows. Required for rescue of stalled ribosomes mediated by trans-translation. Binds to transfer-messenger RNA (tmRNA), required for stable association of tmRNA with ribosomes. tmRNA and SmpB together mimic tRNA shape, replacing the anticodon stem-loop with SmpB. tmRNA is encoded by the ssrA gene; the 2 termini fold to resemble tRNA(Ala) and it encodes a 'tag peptide', a short internal open reading frame. During trans-translation Ala-aminoacylated tmRNA acts like a tRNA, entering the A-site of stalled ribosomes, displacing the stalled mRNA. The ribosome then switches to translate the ORF on the tmRNA; the nascent peptide is terminated with the 'tag peptide' encoded by the tmRNA and targeted for degradation. The ribosome is freed to recommence translation, which seems to be the essential function of trans-translation. The sequence is that of SsrA-binding protein from Desulforudis audaxviator (strain MP104C).